The sequence spans 70 residues: Putative venom toxin Ts29 (70 aa).

The signal sequence occupies residues 1–20; that stretch reads MSPLFVVLLIATTTFYHSDA.

Expressed by the venom gland.

It is found in the secreted. This is Putative venom toxin Ts29 from Tityus serrulatus (Brazilian scorpion).